The sequence spans 159 residues: MVGKASYVRFPLLFRPILERLMFDFDATLPLMAVQFLILTVILNALLYKPLGQALDNRDEYIRTNLQQAKERLQQATELANQYEQELAYTRREAQAIIEEARAEAQKIATAEIAAAQQALQAELMKAQAEIDQQKQATLQALEGQVSSLSEQLLAKLLA.

The chain crosses the membrane as a helical span at residues 27 to 47 (ATLPLMAVQFLILTVILNALL).

It belongs to the ATPase B chain family. F-type ATPases have 2 components, F(1) - the catalytic core - and F(0) - the membrane proton channel. F(1) has five subunits: alpha(3), beta(3), gamma(1), delta(1), epsilon(1). F(0) has four main subunits: a(1), b(1), b'(1) and c(10-14). The alpha and beta chains form an alternating ring which encloses part of the gamma chain. F(1) is attached to F(0) by a central stalk formed by the gamma and epsilon chains, while a peripheral stalk is formed by the delta, b and b' chains.

The protein resides in the cellular thylakoid membrane. In terms of biological role, f(1)F(0) ATP synthase produces ATP from ADP in the presence of a proton or sodium gradient. F-type ATPases consist of two structural domains, F(1) containing the extramembraneous catalytic core and F(0) containing the membrane proton channel, linked together by a central stalk and a peripheral stalk. During catalysis, ATP synthesis in the catalytic domain of F(1) is coupled via a rotary mechanism of the central stalk subunits to proton translocation. Component of the F(0) channel, it forms part of the peripheral stalk, linking F(1) to F(0). The b'-subunit is a diverged and duplicated form of b found in plants and photosynthetic bacteria. The polypeptide is ATP synthase subunit b' (Synechococcus sp. (strain PCC 6716)).